A 98-amino-acid polypeptide reads, in one-letter code: Integration host factor subunit beta (98 aa).

The protein belongs to the bacterial histone-like protein family. In terms of assembly, heterodimer of an alpha and a beta chain.

Functionally, this protein is one of the two subunits of integration host factor, a specific DNA-binding protein that functions in genetic recombination as well as in transcriptional and translational control. The protein is Integration host factor subunit beta of Pseudomonas entomophila (strain L48).